Reading from the N-terminus, the 234-residue chain is Nuclear transcription factor Y subunit B-6 (234 aa).

2 disordered regions span residues methionine 1 to proline 21 and methionine 35 to threonine 55. Residues methionine 63–isoleucine 69 mediate DNA binding. The interval isoleucine 90–isoleucine 101 is subunit association domain (SAD). The disordered stretch occupies residues asparagine 206–tyrosine 234. Low complexity predominate over residues serine 213 to alanine 222.

This sequence belongs to the NFYB/HAP3 subunit family. Heterotrimeric transcription factor composed of three components, NF-YA, NF-YB and NF-YC. NF-YB and NF-YC must interact and dimerize for NF-YA association and DNA binding. Interacts with PRN1. Binds directly with DPB3-1. In terms of tissue distribution, expressed in roots, flowers and developing siliques. Present in etiolated seedlings.

It localises to the nucleus. Functionally, component of the NF-Y/HAP transcription factor complex. The NF-Y complex stimulates the transcription of various genes by recognizing and binding to a CCAAT motif in promoters. Plays a role in the regulation of the embryogenesis. Involved in the abscisic acid (ABA) signaling pathway. This Arabidopsis thaliana (Mouse-ear cress) protein is Nuclear transcription factor Y subunit B-6.